Consider the following 927-residue polypeptide: Isoleucine--tRNA ligase (927 aa).

The 'HIGH' region signature appears at 60–70 (PYANGNIHLGH). Residue E557 participates in L-isoleucyl-5'-AMP binding. A 'KMSKS' region motif is present at residues 598–602 (KMSKS). K601 lines the ATP pocket. C895, C898, C915, and C918 together coordinate Zn(2+).

Belongs to the class-I aminoacyl-tRNA synthetase family. IleS type 1 subfamily. In terms of assembly, monomer. The cofactor is Zn(2+).

The protein localises to the cytoplasm. It carries out the reaction tRNA(Ile) + L-isoleucine + ATP = L-isoleucyl-tRNA(Ile) + AMP + diphosphate. Catalyzes the attachment of isoleucine to tRNA(Ile). As IleRS can inadvertently accommodate and process structurally similar amino acids such as valine, to avoid such errors it has two additional distinct tRNA(Ile)-dependent editing activities. One activity is designated as 'pretransfer' editing and involves the hydrolysis of activated Val-AMP. The other activity is designated 'posttransfer' editing and involves deacylation of mischarged Val-tRNA(Ile). This chain is Isoleucine--tRNA ligase, found in Syntrophomonas wolfei subsp. wolfei (strain DSM 2245B / Goettingen).